The primary structure comprises 63 residues: Large ribosomal subunit protein bL32 (63 aa).

The interval 1–27 is disordered; that stretch reads MANPKAKMSKSRRDKRRAQFNARTKPV. Over residues 7–18 the composition is skewed to basic residues; sequence KMSKSRRDKRRA.

The protein belongs to the bacterial ribosomal protein bL32 family.

In Chlorobium phaeobacteroides (strain DSM 266 / SMG 266 / 2430), this protein is Large ribosomal subunit protein bL32.